We begin with the raw amino-acid sequence, 413 residues long: Inactive serine protease 35 (413 aa).

The signal sequence occupies residues 1-16 (MENMLLWLIFFTPGWT). An N-linked (GlcNAc...) asparagine glycan is attached at N90. The Peptidase S1 domain maps to 124–408 (VYGTDSRFSI…ICLWIHGNDA (285 aa)). A disulfide bond links C154 and C170. A compositionally biased stretch (basic residues) spans 191–207 (MRNKSGGKKRRGSKRSR). Residues 191–250 (MRNKSGGKKRRGSKRSRREASGGDQREGTREHLRERAKGGRRRKKSGRGQRIAEGRPSFQ) are disordered. The segment covering 208–228 (REASGGDQREGTREHLRERAK) has biased composition (basic and acidic residues). Basic residues predominate over residues 229–238 (GGRRRKKSGR).

This sequence belongs to the peptidase S1 family.

It is found in the secreted. The sequence is that of Inactive serine protease 35 (PRSS35) from Homo sapiens (Human).